We begin with the raw amino-acid sequence, 219 residues long: MAMFYAHALGGYDENLHAFPGISSTVANDVRKYSVVSVYNNKYDIVKDKYMWCYSQVNKRYIGALLPMFECNEYLQIGDPIHDQEGNQISIITYRHKNYYALSGIGYESLDLCLEGVGIHHHVLETGNAVYGKVQHDYSTIKEKAKEMSTLSPGPIIDYHVWIGDCICQVTAVDVHGKEIMRMRFKKGAVLPIPNLVKVKLGENDTENLSSTISAAPSR.

His17 (proton donor) is an active-site residue. The active-site Shared with catalytic histidine of dimeric partner is Tyr138. Lys142 (proton acceptor; shared with catalytic histidine of dimeric partner) is an active-site residue.

This sequence belongs to the poxin family. Homodimer.

The catalysed reaction is 2',3'-cGAMP + H2O = Gp(2'-5')Ap(3') + H(+). Its function is as follows. Nuclease that is responsible for viral evasion of host cGAS-STING innate immunity. Cleaves 2',3'-cGAMP which is produced by host cGAS following recognition of cytosolic DNA and blocks the subsequent 2',3'-cGAMP-mediated activation of TMEM173/STING, which normally spreads to adjacent cells and activates the interferon and NF-kappa-B immune responses. The chain is Poxin (OPG188) from Homo sapiens (Human).